We begin with the raw amino-acid sequence, 225 residues long: Cobalt transport protein CbiM (225 aa).

Transmembrane regions (helical) follow at residues 7 to 27, 43 to 63, 76 to 96, 108 to 128, 143 to 163, and 175 to 195; these read VLPL…VAIA, PFVG…VPVP, LAAV…ALLI, TLGA…YFAF, FLAG…ALAL, and FTGV…LEGV.

The protein belongs to the CbiM family. In terms of assembly, forms an energy-coupling factor (ECF) transporter complex composed of an ATP-binding protein (A component, CbiO), a transmembrane protein (T component, CbiQ) and 2 possible substrate-capture proteins (S components, CbiM and CbiN) of unknown stoichimetry.

It localises to the cell inner membrane. It functions in the pathway cofactor biosynthesis; adenosylcobalamin biosynthesis. Functionally, part of the energy-coupling factor (ECF) transporter complex CbiMNOQ involved in cobalt import. This chain is Cobalt transport protein CbiM, found in Sorangium cellulosum (strain So ce56) (Polyangium cellulosum (strain So ce56)).